We begin with the raw amino-acid sequence, 614 residues long: Translation initiation factor IF-2 (614 aa).

The tr-type G domain occupies 115 to 283 (ARAPIVTIMG…ILLIAELNDY (169 aa)). The segment at 124-131 (GHVDHGKT) is G1. Position 124–131 (124–131 (GHVDHGKT)) interacts with GTP. The interval 149–153 (GITQH) is G2. The interval 170-173 (DTPG) is G3. Residues 170–174 (DTPGH) and 224–227 (NKMD) contribute to the GTP site. The tract at residues 224 to 227 (NKMD) is G4. The G5 stretch occupies residues 260–262 (SAL).

The protein belongs to the TRAFAC class translation factor GTPase superfamily. Classic translation factor GTPase family. IF-2 subfamily.

The protein resides in the cytoplasm. One of the essential components for the initiation of protein synthesis. Protects formylmethionyl-tRNA from spontaneous hydrolysis and promotes its binding to the 30S ribosomal subunits. Also involved in the hydrolysis of GTP during the formation of the 70S ribosomal complex. This is Translation initiation factor IF-2 from Ureaplasma urealyticum serovar 10 (strain ATCC 33699 / Western).